Here is a 524-residue protein sequence, read N- to C-terminus: 2-isopropylmalate synthase (524 aa).

Residues 12–274 (VIIFDTTLRD…WNRIETTMLT (263 aa)) enclose the Pyruvate carboxyltransferase domain. The Mn(2+) site is built by Asp21, His209, His211, and Asn245. The tract at residues 398–524 (KLMSLTVIAG…EDAPAVAVAG (127 aa)) is regulatory domain.

It belongs to the alpha-IPM synthase/homocitrate synthase family. LeuA type 1 subfamily. Homodimer. Mn(2+) is required as a cofactor.

The protein resides in the cytoplasm. It carries out the reaction 3-methyl-2-oxobutanoate + acetyl-CoA + H2O = (2S)-2-isopropylmalate + CoA + H(+). It participates in amino-acid biosynthesis; L-leucine biosynthesis; L-leucine from 3-methyl-2-oxobutanoate: step 1/4. Functionally, catalyzes the condensation of the acetyl group of acetyl-CoA with 3-methyl-2-oxobutanoate (2-ketoisovalerate) to form 3-carboxy-3-hydroxy-4-methylpentanoate (2-isopropylmalate). The protein is 2-isopropylmalate synthase of Rhodopseudomonas palustris (strain ATCC BAA-98 / CGA009).